Here is a 287-residue protein sequence, read N- to C-terminus: Diphthine methyl ester synthase (287 aa).

Residues Leu-9, Asp-84, Gly-87, 112-113 (SI), Leu-163, Val-221, and His-248 each bind S-adenosyl-L-methionine.

Belongs to the diphthine synthase family.

The protein localises to the cytoplasm. The enzyme catalyses 2-[(3S)-amino-3-carboxypropyl]-L-histidyl-[translation elongation factor 2] + 4 S-adenosyl-L-methionine = diphthine methyl ester-[translation elongation factor 2] + 4 S-adenosyl-L-homocysteine + 3 H(+). It participates in protein modification; peptidyl-diphthamide biosynthesis. In terms of biological role, S-adenosyl-L-methionine-dependent methyltransferase that catalyzes four methylations of the modified target histidine residue in translation elongation factor 2 (EF-2), to form an intermediate called diphthine methyl ester. The four successive methylation reactions represent the second step of diphthamide biosynthesis. In Neurospora crassa (strain ATCC 24698 / 74-OR23-1A / CBS 708.71 / DSM 1257 / FGSC 987), this protein is Diphthine methyl ester synthase (dph-5).